The primary structure comprises 488 residues: MMPQLRDSGNHSTAPLDGRTRGEVDAFIRIFGIETEYGVSVTGADAPCDAGQTAMMMFQPIVAQARSTNTYIENGSRLYLDVGSHPEYATAEARDPMDALALDAAGELVMRDLAMDTQHRLREGHGRRAIVHVFKNNADSAGHSFGCHENYLVRRFVPLETIEHELLPFLITRQIFTGAGRVGGQGFQITQRADFLDEAVSSATTRSRPMVNTRDEPHADPDAFRRLHVIIGDSNRSQWATMMKLATTHLVLCVIEQAGREGRESGFARFAFADPGAANHAVSRDASGVGAVFDMADGDVIRGGAVAVQERYLAAVERFVEDHPEVGASLPRTDVHDVIAQWHEALEAFRSGDVDALADRVDWVCKKRLFDALQARTGHLPASRLEQLDMDYHDVANGTVYASLCRRGGMRTLLGRDAADRAVHMPPDDTRAALRGRFVREAKAKGARYSCDWTRLTLMSPHHSEMVLLDPFDFEESERFRQMMDMLA.

Glu34 provides a ligand contact to Mg(2+). Arg77 is a binding site for ATP. Tyr79 contacts Mg(2+). Catalysis depends on Asp81, which acts as the Proton acceptor. Glu87 is a Mg(2+) binding site. Residues Thr90 and Trp453 each coordinate ATP.

Belongs to the Pup ligase/Pup deamidase family. Pup-conjugating enzyme subfamily.

It carries out the reaction ATP + [prokaryotic ubiquitin-like protein]-L-glutamate + [protein]-L-lysine = ADP + phosphate + N(6)-([prokaryotic ubiquitin-like protein]-gamma-L-glutamyl)-[protein]-L-lysine.. Its pathway is protein degradation; proteasomal Pup-dependent pathway. It functions in the pathway protein modification; protein pupylation. Functionally, catalyzes the covalent attachment of the prokaryotic ubiquitin-like protein modifier Pup to the proteasomal substrate proteins, thereby targeting them for proteasomal degradation. This tagging system is termed pupylation. The ligation reaction involves the side-chain carboxylate of the C-terminal glutamate of Pup and the side-chain amino group of a substrate lysine. In Bifidobacterium dentium (strain ATCC 27534 / DSM 20436 / JCM 1195 / Bd1), this protein is Pup--protein ligase.